We begin with the raw amino-acid sequence, 213 residues long: Golgi to ER traffic protein 1 (213 aa).

The Lumenal segment spans residues 1 to 4 (MESW). A helical transmembrane segment spans residues 5–25 (LLVILAFLVLERLWPLIDSLI). Residues 26-98 (QRFAQANSTK…RTKASLKKVK (73 aa)) are Cytoplasmic-facing. The stretch at 55–99 (AQDQYVKWTKNNRTLEKINKQIEEEKKQLLSQVDRTKASLKKVKL) forms a coiled coil. The chain crosses the membrane as a helical span at residues 99-119 (LVLITVPFTILKFYKGKMPIY). Over 120-158 (DLPKGLFPNYLQGLFQHGWVYLALGPLNIKKVGDGTHVT) the chain is Lumenal. The chain crosses the membrane as a helical span at residues 159–175 (VSLAIWLFALLKVVSTL). Over 176 to 213 (GNIWESLTAPAIPAPTITTDPIDQTNESEKPPVDQPVD) the chain is Cytoplasmic. The segment at 193–213 (TTDPIDQTNESEKPPVDQPVD) is disordered.

Belongs to the WRB/GET1 family. As to quaternary structure, component of the Golgi to ER traffic (GET) complex, which is composed of GET1, GET2 and GET3. Within the complex, GET1 and GET2 form a heterotetramer which is stabilized by phosphatidylinositol binding and which binds to the GET3 homodimer.

It localises to the endoplasmic reticulum membrane. The protein localises to the golgi apparatus membrane. Its function is as follows. Required for the post-translational delivery of tail-anchored (TA) proteins to the endoplasmic reticulum. Together with GET2, acts as a membrane receptor for soluble GET3, which recognizes and selectively binds the transmembrane domain of TA proteins in the cytosol. The GET complex cooperates with the HDEL receptor ERD2 to mediate the ATP-dependent retrieval of resident ER proteins that contain a C-terminal H-D-E-L retention signal from the Golgi to the ER. In Kluyveromyces lactis (strain ATCC 8585 / CBS 2359 / DSM 70799 / NBRC 1267 / NRRL Y-1140 / WM37) (Yeast), this protein is Golgi to ER traffic protein 1.